The primary structure comprises 132 residues: Agouti-signaling protein (132 aa).

An N-terminal signal peptide occupies residues 1–22 (MDVTRLVLATLLVFLCFFAAYS). Residue asparagine 39 is glycosylated (N-linked (GlcNAc...) asparagine). Residues 60-93 (KKISRKEAEKRRSSKKEASKQKVARPRTPLSVPC) are disordered. Residues 64-79 (RKEAEKRRSSKKEASK) show a composition bias toward basic and acidic residues. Cystine bridges form between cysteine 93–cysteine 108, cysteine 100–cysteine 114, cysteine 107–cysteine 125, cysteine 111–cysteine 132, and cysteine 116–cysteine 123. Residues 93-132 (CVSTRGSCKPPAPACCHPCASCQCRFFRSACSCRVLNVNC) form the Agouti domain.

It localises to the secreted. In terms of biological role, involved in the regulation of melanogenesis. The binding of ASP to MC1R precludes alpha-MSH initiated signaling and thus blocks production of cAMP, leading to a down-regulation of eumelanogenesis (brown/black pigment) and thus increasing synthesis of pheomelanin (yellow/red pigment). This chain is Agouti-signaling protein (ASIP), found in Cebuella pygmaea (Pygmy marmoset).